A 285-amino-acid polypeptide reads, in one-letter code: 2,3,4,5-tetrahydropyridine-2,6-dicarboxylate N-succinyltransferase (285 aa).

Residues R111 and D148 each coordinate substrate.

It belongs to the transferase hexapeptide repeat family. Homotrimer.

It is found in the cytoplasm. It carries out the reaction (S)-2,3,4,5-tetrahydrodipicolinate + succinyl-CoA + H2O = (S)-2-succinylamino-6-oxoheptanedioate + CoA. It participates in amino-acid biosynthesis; L-lysine biosynthesis via DAP pathway; LL-2,6-diaminopimelate from (S)-tetrahydrodipicolinate (succinylase route): step 1/3. The polypeptide is 2,3,4,5-tetrahydropyridine-2,6-dicarboxylate N-succinyltransferase (Allorhizobium ampelinum (strain ATCC BAA-846 / DSM 112012 / S4) (Agrobacterium vitis (strain S4))).